We begin with the raw amino-acid sequence, 215 residues long: MADS-box transcription factor 4 (215 aa).

One can recognise an MADS-box domain in the interval 1–61 (MGRGKIEIKR…GKLSDYCTPK (61 aa)). One can recognise a K-box domain in the interval 89–175 (HKSLSAEIDR…AFRVHQQEVE (87 aa)).

As to quaternary structure, may interact with the K-box of MADS16. As to expression, highly expressed in lodicules, at intermediate levels in stamens, and weakly in carpels. Expressed in pollen.

It localises to the nucleus. In terms of biological role, probable transcription factor involved in the development of floral organs. B-class protein required for normal development of lodicules and stamens (whorls 2 and 3). May function as a heterodimer with MADS16. This is MADS-box transcription factor 4 (MADS4) from Oryza sativa subsp. japonica (Rice).